Consider the following 607-residue polypeptide: NADH-ubiquinone oxidoreductase chain 5 (607 aa).

The next 16 helical transmembrane spans lie at 3 to 23, 35 to 55, 84 to 104, 117 to 137, 140 to 160, 171 to 191, 210 to 230, 241 to 261, 272 to 292, 301 to 320, 324 to 344, 365 to 385, 405 to 427, 457 to 477, 482 to 502, and 586 to 606; these read IFTTSILLIFILLLSPILISM, YTTTSIKFSFIISLLPLLMFF, FFSILFTSVALFVTWSIMQFS, FIKYLTLFLITMLILTSANNM, LFIGWEGVGIMSFLLIGWWYG, AILYNRIGDIGFILAMVWFSL, LIPLMGLLIAATGKSAQFGLH, TPVSALLHSSTMVVAGIFLLV, FILTTMLCLGALTTLFTAICA, IIAFSTSSQLGLMMVTLGMN, LAFLHICTHAFFKAMLFMCSG, IMPFTSSCLVIGSLALTGMPF, NAWALLITLIATSMTAMYSMRII, LAFGSIFAGFVISYNIPPTSI, MPWFLKTTALIISVLGFLIAL, and LYFMSFLINIILIIILYSINL.

The protein belongs to the complex I subunit 5 family. As to quaternary structure, core subunit of respiratory chain NADH dehydrogenase (Complex I) which is composed of 45 different subunits.

The protein resides in the mitochondrion inner membrane. It carries out the reaction a ubiquinone + NADH + 5 H(+)(in) = a ubiquinol + NAD(+) + 4 H(+)(out). In terms of biological role, core subunit of the mitochondrial membrane respiratory chain NADH dehydrogenase (Complex I) which catalyzes electron transfer from NADH through the respiratory chain, using ubiquinone as an electron acceptor. Essential for the catalytic activity and assembly of complex I. This is NADH-ubiquinone oxidoreductase chain 5 (Mtnd5) from Mus musculus (Mouse).